The following is a 139-amino-acid chain: Transcriptional regulator WhiB5 (139 aa).

In terms of domain architecture, 4Fe-4S Wbl-type spans 4 to 77; the sequence is PCATDPELWF…AGIKLPGGQY (74 aa). Residues C5, C41, C45, and C53 each coordinate [4Fe-4S] cluster.

This sequence belongs to the WhiB family. [4Fe-4S] cluster serves as cofactor. The Fe-S cluster can be nitrosylated by nitric oxide (NO). Post-translationally, upon Fe-S cluster removal intramolecular disulfide bonds are formed.

The protein resides in the cytoplasm. Functionally, a transcription factor that is probably redox-responsive. Probably plays a role in immunomodulation and reactivation after chronic infection. Its induction results in transcription of a number of genes including sigM, and the genes for 2 type VII secretion systems ESX-2 and ESX-4. Seems to negatively regulate its own expression. The apo-form has been shown to act as a protein disulfide reductase. The apo- but not holo-form probably binds DNA. The polypeptide is Transcriptional regulator WhiB5 (whiB5) (Mycobacterium tuberculosis (strain ATCC 25618 / H37Rv)).